Reading from the N-terminus, the 343-residue chain is L-threonine 3-dehydrogenase (343 aa).

Cysteine 40 lines the Zn(2+) pocket. Catalysis depends on charge relay system residues threonine 42 and histidine 45. 6 residues coordinate Zn(2+): histidine 65, glutamate 66, cysteine 95, cysteine 98, cysteine 101, and cysteine 109. NAD(+)-binding positions include isoleucine 177, aspartate 197, arginine 202, 264-266 (LGI), and 288-289 (IY).

It belongs to the zinc-containing alcohol dehydrogenase family. In terms of assembly, homotetramer. Zn(2+) is required as a cofactor.

It localises to the cytoplasm. The catalysed reaction is L-threonine + NAD(+) = (2S)-2-amino-3-oxobutanoate + NADH + H(+). Its pathway is amino-acid degradation; L-threonine degradation via oxydo-reductase pathway; glycine from L-threonine: step 1/2. Functionally, catalyzes the NAD(+)-dependent oxidation of L-threonine to 2-amino-3-ketobutyrate. This is L-threonine 3-dehydrogenase from Aliivibrio fischeri (strain ATCC 700601 / ES114) (Vibrio fischeri).